We begin with the raw amino-acid sequence, 318 residues long: uncharacterized protein (318 aa).

It belongs to the NAD(P)-dependent epimerase/dehydratase family.

This is an uncharacterized protein from Staphylococcus epidermidis (strain ATCC 12228 / FDA PCI 1200).